The chain runs to 305 residues: Secreted mono- and diacylglycerol lipase A (305 aa).

A signal peptide spans 1-26 (MRLSFFTALSAVASLGYALPGKLQSR). Disulfide bonds link Cys62/Cys67 and Cys129/Cys132. Ser171 (nucleophile) is an active-site residue. The Charge relay system role is filled by Asp225. An N-linked (GlcNAc...) asparagine glycan is attached at Asn251. Catalysis depends on His285, which acts as the Charge relay system. Positions 303–305 (KRV) are cleaved as a propeptide — removed in mature form.

It belongs to the AB hydrolase superfamily. Lipase family. Class 3 subfamily. Multiple forms of this lipase are due to the presence of different carbohydrates, which may contribute to the stability of this lipase but not to the enzyme activity.

It is found in the secreted. The enzyme catalyses a monoacylglycerol + H2O = glycerol + a fatty acid + H(+). It carries out the reaction a diacylglycerol + H2O = a monoacylglycerol + a fatty acid + H(+). Its activity is regulated as follows. Both Fe(3+) and Hg(2+) inhibit the activity significantly. Its function is as follows. Secreted lipase strictly specific to mono- and diacylglycerol, but not triacylglycerol. Hydrolyzes long-chain monoacylglycerols most efficiently with the highest activities observed on 1- and 3- monopalmitoyl-sn-glycerol or 1-monostearoyl-rac-glycerol. Prefers to attack alpha positions to beta positions of monoacylglycerol, but shows no stereospecificity on mono- and diacylglycerol. In Penicillium camembertii, this protein is Secreted mono- and diacylglycerol lipase A.